A 382-amino-acid chain; its full sequence is S-adenosylmethionine decarboxylase proenzyme (382 aa).

Phe-32 provides a ligand contact to substrate. Residues Glu-33 and Glu-36 contribute to the active site. Substrate is bound at residue Leu-87. Residue Ser-90 is the Schiff-base intermediate with substrate; via pyruvic acid of the active site. Ser-90 carries the post-translational modification Pyruvic acid (Ser); by autocatalysis. Cys-104 serves as the catalytic Proton donor; for catalytic activity. Phe-248 contacts substrate. Catalysis depends on proton acceptor; for processing activity residues Ser-254 and His-267. A substrate-binding site is contributed by Glu-271.

It belongs to the eukaryotic AdoMetDC family. In terms of assembly, heterotetramer of two alpha and two beta chains. Requires pyruvate as cofactor. Is synthesized initially as an inactive proenzyme. Formation of the active enzyme involves a self-maturation process in which the active site pyruvoyl group is generated from an internal serine residue via an autocatalytic post-translational modification. Two non-identical subunits are generated from the proenzyme in this reaction, and the pyruvate is formed at the N-terminus of the alpha chain, which is derived from the carboxyl end of the proenzyme. The post-translation cleavage follows an unusual pathway, termed non-hydrolytic serinolysis, in which the side chain hydroxyl group of the serine supplies its oxygen atom to form the C-terminus of the beta chain, while the remainder of the serine residue undergoes an oxidative deamination to produce ammonia and the pyruvoyl group blocking the N-terminus of the alpha chain.

The catalysed reaction is S-adenosyl-L-methionine + H(+) = S-adenosyl 3-(methylsulfanyl)propylamine + CO2. The protein operates within amine and polyamine biosynthesis; S-adenosylmethioninamine biosynthesis; S-adenosylmethioninamine from S-adenosyl-L-methionine: step 1/1. The chain is S-adenosylmethionine decarboxylase proenzyme from Leishmania donovani.